The sequence spans 396 residues: NADH-quinone oxidoreductase subunit D (396 aa).

Belongs to the complex I 49 kDa subunit family. In terms of assembly, NDH-1 is composed of 14 different subunits. Subunits NuoB, C, D, E, F, and G constitute the peripheral sector of the complex.

It is found in the cell inner membrane. It carries out the reaction a quinone + NADH + 5 H(+)(in) = a quinol + NAD(+) + 4 H(+)(out). NDH-1 shuttles electrons from NADH, via FMN and iron-sulfur (Fe-S) centers, to quinones in the respiratory chain. The immediate electron acceptor for the enzyme in this species is believed to be ubiquinone. Couples the redox reaction to proton translocation (for every two electrons transferred, four hydrogen ions are translocated across the cytoplasmic membrane), and thus conserves the redox energy in a proton gradient. This Brucella melitensis biotype 1 (strain ATCC 23456 / CCUG 17765 / NCTC 10094 / 16M) protein is NADH-quinone oxidoreductase subunit D.